A 303-amino-acid polypeptide reads, in one-letter code: UPF0282 protein PAE3680 (303 aa).

The protein belongs to the UPF0282 family.

The chain is UPF0282 protein PAE3680 from Pyrobaculum aerophilum (strain ATCC 51768 / DSM 7523 / JCM 9630 / CIP 104966 / NBRC 100827 / IM2).